The following is a 901-amino-acid chain: HTH-type transcriptional regulator MalT (901 aa).

Residue 39–46 coordinates ATP; it reads SPAGYGKT. In terms of domain architecture, HTH luxR-type spans 829-894; sequence ELIRTSPLTQ…AAVQHAQKLL (66 aa). The H-T-H motif DNA-binding region spans 853-872; that stretch reads NEQIAGELEVAATTIKTHIR.

It belongs to the MalT family. Monomer in solution. Oligomerizes to an active state in the presence of the positive effectors ATP and maltotriose.

With respect to regulation, activated by ATP and maltotriose, which are both required for DNA binding. Functionally, positively regulates the transcription of the maltose regulon whose gene products are responsible for uptake and catabolism of malto-oligosaccharides. Specifically binds to the promoter region of its target genes, recognizing a short DNA motif called the MalT box. The polypeptide is HTH-type transcriptional regulator MalT (Escherichia coli O6:K15:H31 (strain 536 / UPEC)).